The primary structure comprises 493 residues: Probable cytochrome P450 6a13 (493 aa).

Residue Cys-435 participates in heme binding.

It belongs to the cytochrome P450 family. Heme serves as cofactor.

The protein localises to the endoplasmic reticulum membrane. It localises to the microsome membrane. Functionally, may be involved in the metabolism of insect hormones and in the breakdown of synthetic insecticides. This chain is Probable cytochrome P450 6a13 (Cyp6a13), found in Drosophila melanogaster (Fruit fly).